The sequence spans 361 residues: Histidine biosynthesis bifunctional protein HisB (361 aa).

The tract at residues 1–172 is histidinol-phosphatase; the sequence is MSQPTLFIDR…PKTTACERPP (172 aa). D9 acts as the Nucleophile in catalysis. Mg(2+) contacts are provided by D9 and D11. Catalysis depends on D11, which acts as the Proton donor. C92, H94, C100, and C102 together coordinate Zn(2+). Residue D129 participates in Mg(2+) binding. Residues 173–361 form an imidazoleglycerol-phosphate dehydratase region; sequence RYAEVVRTTK…NELPSSKGVL (189 aa).

The protein in the N-terminal section; belongs to the histidinol-phosphatase family. This sequence in the C-terminal section; belongs to the imidazoleglycerol-phosphate dehydratase family. It depends on Mg(2+) as a cofactor. Requires Zn(2+) as cofactor.

The protein localises to the cytoplasm. The catalysed reaction is D-erythro-1-(imidazol-4-yl)glycerol 3-phosphate = 3-(imidazol-4-yl)-2-oxopropyl phosphate + H2O. The enzyme catalyses L-histidinol phosphate + H2O = L-histidinol + phosphate. Its pathway is amino-acid biosynthesis; L-histidine biosynthesis; L-histidine from 5-phospho-alpha-D-ribose 1-diphosphate: step 6/9. The protein operates within amino-acid biosynthesis; L-histidine biosynthesis; L-histidine from 5-phospho-alpha-D-ribose 1-diphosphate: step 8/9. This is Histidine biosynthesis bifunctional protein HisB from Actinobacillus pleuropneumoniae serotype 7 (strain AP76).